Here is a 76-residue protein sequence, read N- to C-terminus: Ovarian cancer-related protein 1 (76 aa).

The sequence is that of Ovarian cancer-related protein 1 (OCR1) from Homo sapiens (Human).